A 477-amino-acid chain; its full sequence is Pup--protein ligase (477 aa).

Glu-16 serves as a coordination point for Mg(2+). Arg-60 contributes to the ATP binding site. Residue Tyr-62 coordinates Mg(2+). Asp-64 functions as the Proton acceptor in the catalytic mechanism. Glu-70 lines the Mg(2+) pocket. Positions 73 and 441 each coordinate ATP.

It belongs to the Pup ligase/Pup deamidase family. Pup-conjugating enzyme subfamily.

The enzyme catalyses ATP + [prokaryotic ubiquitin-like protein]-L-glutamate + [protein]-L-lysine = ADP + phosphate + N(6)-([prokaryotic ubiquitin-like protein]-gamma-L-glutamyl)-[protein]-L-lysine.. It participates in protein degradation; proteasomal Pup-dependent pathway. The protein operates within protein modification; protein pupylation. Catalyzes the covalent attachment of the prokaryotic ubiquitin-like protein modifier Pup to the proteasomal substrate proteins, thereby targeting them for proteasomal degradation. This tagging system is termed pupylation. The ligation reaction involves the side-chain carboxylate of the C-terminal glutamate of Pup and the side-chain amino group of a substrate lysine. The protein is Pup--protein ligase of Corynebacterium kroppenstedtii (strain DSM 44385 / JCM 11950 / CIP 105744 / CCUG 35717).